Consider the following 239-residue polypeptide: Ribose-5-phosphate isomerase A (239 aa).

Residues 34–37 (TGST), 94–97 (DGAD), and 107–110 (KGGG) each bind substrate. Glutamate 116 (proton acceptor) is an active-site residue. Lysine 134 serves as a coordination point for substrate.

Belongs to the ribose 5-phosphate isomerase family. In terms of assembly, homodimer.

The enzyme catalyses aldehydo-D-ribose 5-phosphate = D-ribulose 5-phosphate. It participates in carbohydrate degradation; pentose phosphate pathway; D-ribose 5-phosphate from D-ribulose 5-phosphate (non-oxidative stage): step 1/1. Catalyzes the reversible conversion of ribose-5-phosphate to ribulose 5-phosphate. The chain is Ribose-5-phosphate isomerase A from Treponema denticola (strain ATCC 35405 / DSM 14222 / CIP 103919 / JCM 8153 / KCTC 15104).